The sequence spans 330 residues: 3',5'-cyclic-nucleotide phosphodiesterase (330 aa).

The first 22 residues, 1-22 (MFKNKLAVLFTCLSVFSFSAQS), serve as a signal peptide directing secretion.

It belongs to the cyclic nucleotide phosphodiesterase class-II family.

It is found in the periplasm. It catalyses the reaction a nucleoside 3',5'-cyclic phosphate + H2O = a nucleoside 5'-phosphate + H(+). In terms of biological role, seems to allow the organism to grow on cAMP. In Aliivibrio fischeri (Vibrio fischeri), this protein is 3',5'-cyclic-nucleotide phosphodiesterase (cpdP).